A 299-amino-acid chain; its full sequence is Glycine--tRNA ligase alpha subunit (299 aa).

It belongs to the class-II aminoacyl-tRNA synthetase family. As to quaternary structure, tetramer of two alpha and two beta subunits.

It is found in the cytoplasm. The catalysed reaction is tRNA(Gly) + glycine + ATP = glycyl-tRNA(Gly) + AMP + diphosphate. This chain is Glycine--tRNA ligase alpha subunit, found in Dictyoglomus turgidum (strain DSM 6724 / Z-1310).